The chain runs to 85 residues: Anti-neuroexcitation peptide 3 (85 aa).

Residues 1–21 (MKLSLLLVISASMLIDGLVNA) form the signal peptide. Residues 22–82 (DGYIRGSNGC…TWKSESNTCG (61 aa)) form the LCN-type CS-alpha/beta domain. Intrachain disulfides connect Cys-31–Cys-81, Cys-35–Cys-56, Cys-42–Cys-63, and Cys-46–Cys-65.

Belongs to the long (4 C-C) scorpion toxin superfamily. Sodium channel inhibitor family. Beta subfamily. In terms of tissue distribution, expressed by the venom gland.

The protein localises to the secreted. Functionally, binds to sodium channels (Nav) and inhibits them. Recombinant ANEP delays the convulsion seizure of model animals by 18% and shows anti-neuroexcitatory activity. The sequence is that of Anti-neuroexcitation peptide 3 from Olivierus martensii (Manchurian scorpion).